The sequence spans 308 residues: Eukaryotic translation initiation factor 3 subunit G-B (308 aa).

Disordered stretches follow at residues 1–35 (MPTG…KQDP) and 176–227 (STAD…DDNA). The span at 185–194 (GAEPEPAQAP) shows a compositional bias: low complexity. Over residues 209 to 227 (GGSRRGESMQPNRRADDNA) the composition is skewed to basic and acidic residues. The RRM domain occupies 227-305 (ATIRVTNLSE…LILNVEWAKP (79 aa)).

It belongs to the eIF-3 subunit G family. In terms of assembly, component of the eukaryotic translation initiation factor 3 (eIF-3) complex, which is composed of 13 subunits: eif3a, eif3b, eif3c, eif3d, eif3e, eif3f, eif3g, eif3h, eif3i, eif3j, eif3k, eif3l and eif3m.

The protein localises to the cytoplasm. Its function is as follows. RNA-binding component of the eukaryotic translation initiation factor 3 (eIF-3) complex, which is involved in protein synthesis of a specialized repertoire of mRNAs and, together with other initiation factors, stimulates binding of mRNA and methionyl-tRNAi to the 40S ribosome. The eIF-3 complex specifically targets and initiates translation of a subset of mRNAs involved in cell proliferation. This subunit can bind 18S rRNA. This chain is Eukaryotic translation initiation factor 3 subunit G-B (eif3g-b), found in Xenopus laevis (African clawed frog).